A 456-amino-acid polypeptide reads, in one-letter code: N(6)-adenosine-methyltransferase non-catalytic subunit METTL14 (456 aa).

The interval 43-74 (EIAETRETSRASYDTSAAVSKRKLPEEGKADE) is disordered. The segment covering 65-74 (KLPEEGKADE) has biased composition (basic and acidic residues). 2 interaction with METTL3 regions span residues 135-136 (RD) and 237-238 (SG). The segment at 245–254 (RMCLRKWGFR) is positively charged region required for RNA-binding. Interaction with METTL3 stretches follow at residues 255 to 258 (RSED) and 278 to 287 (KAIFQRTKEH). The tract at residues 297-298 (HR) is positively charged region required for RNA-binding. Residues 308–312 (NVDID) form an interaction with METTL3 region. The interval 395 to 456 (LRPKTPPPKS…GPHRGVFAPR (62 aa)) is disordered. Residues 410–421 (ASRGGGRGGASA) are compositionally biased toward gly residues. Positions 423–441 (RGERGRERNRGSFRGDRGN) are enriched in basic and acidic residues.

Belongs to the MT-A70-like family. Heterodimer; heterodimerizes with mettl3 to form an antiparallel heterodimer that constitutes an active methyltransferase. Component of the WMM complex, a N6-methyltransferase complex composed of a catalytic subcomplex, named MAC, and of an associated subcomplex, named MACOM. The MAC subcomplex is composed of mettl3 and mettl14.

Its subcellular location is the nucleus. Its function is as follows. The METTL3-METTL14 heterodimer forms a N6-methyltransferase complex that methylates adenosine residues at the N(6) position of some mRNAs and regulates the circadian clock, differentiation of embryonic stem cells and cortical neurogenesis. In the heterodimer formed with mettl3, mettl14 constitutes the RNA-binding scaffold that recognizes the substrate rather than the catalytic core. N6-methyladenosine (m6A), which takes place at the 5'-[AG]GAC-3' consensus sites of some mRNAs, plays a role in mRNA stability and processing. In Xenopus laevis (African clawed frog), this protein is N(6)-adenosine-methyltransferase non-catalytic subunit METTL14 (mettl14).